Here is a 418-residue protein sequence, read N- to C-terminus: Serpin H1 (418 aa).

The first 18 residues, 1 to 18 (MRALLLISTICLLARALA), serve as a signal peptide directing secretion. At lysine 94 the chain carries N6-succinyllysine. N-linked (GlcNAc...) asparagine glycosylation is found at asparagine 120 and asparagine 125. Serine 141 is modified (phosphoserine). Position 207 is an N6-acetyllysine (lysine 207). The residue at position 296 (lysine 296) is an N6-succinyllysine. An N6-acetyllysine modification is found at lysine 319. The Prevents secretion from ER signature appears at 415-418 (RDEL).

Belongs to the serpin family.

It localises to the endoplasmic reticulum lumen. In terms of biological role, binds specifically to collagen. Could be involved as a chaperone in the biosynthetic pathway of collagen. This chain is Serpin H1 (SERPINH1), found in Bos taurus (Bovine).